The primary structure comprises 506 residues: MSESHSQDGAPQALDMNNELRSRREKLGQLRQQGIAFPNDFRRDAVSDQLHARYGEKSNEELEALNIEVSIAGRMMTRRIMGKASFATLQDVGGKIQLYVARDDLPEGQYNEQFKKWDLGDILGTRGKLFKTRTGELSVHCSEIRLLTKAMRPLPDKFHGLADQETRYRQRYLDLIANDESRQTFKVRSRIMAEIRRFMMDNDFMEVETPMMQTIPGGAAARPFITHHNALGIDMYLRIAPELYLKRLVVGGFERVFEINRNFRNEGLSPRHNPEFTMMELYMAYADYRDLIVLVETLFRTLTQRVLGSSVVHNGDQTFDFGKPFTQMTMKEAICHYRPETRPEALDDMASATAIAESLGIKVDKSWGLGRVQTEVFEETAESHLIQPTFITAYPAEVSPLARRNDDNPFFTDRFEFFIGGREIGNGFSELNDAEDQAARFAEQAQAKDAGDDEAMFYDEDYVTALEHGLPPTAGLGIGIDRLMMLLTNSHTIRDVILFPALRPQK.

E416 and E423 together coordinate Mg(2+).

Belongs to the class-II aminoacyl-tRNA synthetase family. In terms of assembly, homodimer. It depends on Mg(2+) as a cofactor.

It localises to the cytoplasm. It catalyses the reaction tRNA(Lys) + L-lysine + ATP = L-lysyl-tRNA(Lys) + AMP + diphosphate. This is Lysine--tRNA ligase from Sodalis glossinidius (strain morsitans).